We begin with the raw amino-acid sequence, 442 residues long: tRNA-2-methylthio-N(6)-dimethylallyladenosine synthase (442 aa).

The MTTase N-terminal domain occupies 3–120 (KKLYIETHGC…LPEMIDAARI (118 aa)). Positions 12, 49, 83, 157, 161, and 164 each coordinate [4Fe-4S] cluster. Residues 143–375 (RVDGPSAYVS…QHRLNQQGFE (233 aa)) form the Radical SAM core domain. The TRAM domain maps to 378 to 442 (RQMVGSIQRI…PHSLRGSLLQ (65 aa)).

The protein belongs to the methylthiotransferase family. MiaB subfamily. Monomer. [4Fe-4S] cluster serves as cofactor.

The protein resides in the cytoplasm. The enzyme catalyses N(6)-dimethylallyladenosine(37) in tRNA + (sulfur carrier)-SH + AH2 + 2 S-adenosyl-L-methionine = 2-methylsulfanyl-N(6)-dimethylallyladenosine(37) in tRNA + (sulfur carrier)-H + 5'-deoxyadenosine + L-methionine + A + S-adenosyl-L-homocysteine + 2 H(+). Functionally, catalyzes the methylthiolation of N6-(dimethylallyl)adenosine (i(6)A), leading to the formation of 2-methylthio-N6-(dimethylallyl)adenosine (ms(2)i(6)A) at position 37 in tRNAs that read codons beginning with uridine. The protein is tRNA-2-methylthio-N(6)-dimethylallyladenosine synthase of Pseudomonas savastanoi pv. phaseolicola (strain 1448A / Race 6) (Pseudomonas syringae pv. phaseolicola (strain 1448A / Race 6)).